The primary structure comprises 1369 residues: MSVPVAPKKSCYTQLRDNRNAARNNNESILSLGDTNANQIMLEVSSSHDESKTCDLGDEIGNTNSSEPENRTHFHKEFHQLQGFGKGSQAGSASLKDFRLSSTIQRELNEEHTVERGTDSLQTTRSIQGPSLSSWRNVMSEASLDVLAKRDAEIPRHVPKDKLAKTLDNEELRRHSLERASSSVAAVGSLTPQHPQPLSLDSREARGQIPGGGEGPQKTLPDHAVPAAFPATDSTSEGKSVRHPKPSTSESKQSTPSETQTVGAHVLQVCSEHTSHSAHPEPALNLTLASKEIPSKLEAQLGQGKGEAKLDLKYVPPRRVEQEGKAAQEGYLGCHKEENLSALEGRDPCGEAHPEATDALGHLLNSDLHHLGVGRGNCEEKRGVNPGEQDSLHTTPKQGSASLGGADNQPTGKISPCAGEKLGERTSSSFSPGDSHVAFIPNNLTDSKPLDVIEEERRLGSGNKDSVMVLVFNPSVGENKTEVPEPLDPQSGRSEARESKEVTTSVAENRNLLENADKIESTSARADSVLNIPAPLHPETTVNMTYQPTTPSSSFQDVSVFGMDAGSPLVVPPPTDSARLLNTSPKVPDKNTCPSGIPKPVFTHSKDTPSSQEGMENYQVEKTEERTETKPIIMPKPKHVRPKIITYIRRNPQALGQVDASLVPVGLPYAPPTCTMPLPHEEKAAGGDLKPSANLYEKFKPDLQKPRVFSSGLMVSGIKPPGHPFSQMSEKFLQEVTDHPGKEEFCSPPYAHYEVPPTFYRSAMLLKPQLGLGAMSRLPSAKSRILIASQRSSASAIHPPGPITTATSLYSSDPSADLKKASSSNAAKSNLPKSGLRPPGYSRLPAAKLAAFGFVRSSSVSSVSSTQSGDSAQPEQGRPATRSTFGNEEQPVLKASLPSKDTPKGAGRVAPPASSSVTAPRRSLLPAPKSTSTPAGTKKDAQKDQDTNKPAVSSPKRVAASTTKLHSPGYPKQRTAAARNGFPPKPDPQAREAERQLVLRLKERCEQQTRQLGVAQGELKRAICGFDALAVATQHFFRKNESALVKEKELSIELANIRDEVAFHTAKCEKLQKEKEELERRFEDEVKRLGWQQQAELQELEERLQLQFEAEMARLQEEHGDQLLSIRCQHQEQVEDLTASHDAALLEMENNHTVAITILQDDHDHKVQELMSTHELEKKELEENFEKLRLSLQDQVDTLTFQSQSLRDRARRFEEALRKNTEEQLEIALAPYQHLEEDMKSLKQVLEMKNQQIHEQEKKILELEKLAEKNIILEEKIQVLQQQNEDLKARIDQNTVVTRQLSEENANLQEYVEKETQEKKRLSRTNEELLWKLQTGDPTSPIKLSPTSPVYRGSSSGPSSPARVSTTPR.

Disordered regions lie at residues 180–262, 374–442, 477–509, 582–627, 791–839, 861–992, and 1331–1369; these read ASSS…TQTV, GRGN…FIPN, GENK…VAEN, NTSP…EERT, RSSA…LRPP, SSVS…QARE, and WKLQ…TTPR. Polar residues-rich tracts occupy residues 246–262 and 392–401; these read PSTS…TQTV and LHTTPKQGSA. A mediates interaction with MAPRE1 region spans residues 641-980; the sequence is RPKIITYIRR…PKQRTAAARN (340 aa). The interval 801–890 is sufficient for interaction with KIF2C; the sequence is GPITTATSLY…TRSTFGNEEQ (90 aa). A localization to the growing distal tip of microtubules region spans residues 801–1150; that stretch reads GPITTATSLY…HDAALLEMEN (350 aa). A compositionally biased stretch (polar residues) spans 804–814; that stretch reads TTATSLYSSDP. Positions 821–834 are enriched in low complexity; sequence ASSSNAAKSNLPKS. Basic and acidic residues predominate over residues 937 to 947; that stretch reads TKKDAQKDQDT. Residues 991 to 1335 adopt a coiled-coil conformation; that stretch reads REAERQLVLR…NEELLWKLQT (345 aa). A compositionally biased stretch (low complexity) spans 1348–1369; the sequence is SPVYRGSSSGPSSPARVSTTPR.

This sequence in the C-terminal section; belongs to the MTUS1 family. In terms of assembly, homodimer. Interacts with KIF2C and MAPRE1; the interaction is direct and probably targets MTUS2 and KIF2C to microtubules. As to expression, detected in embryonic stem cells differentiating to cardiomyocytes.

Its subcellular location is the cytoplasm. It is found in the cytoskeleton. Functionally, binds microtubules. Together with MAPRE1 may target the microtubule depolymerase KIF2C to the plus-end of microtubules. May regulate the dynamics of microtubules at their growing distal tip. This is Microtubule-associated tumor suppressor candidate 2 (MTUS2) from Homo sapiens (Human).